The following is a 352-amino-acid chain: Biotin synthase (352 aa).

The region spanning 44-262 (NRVQVSTLLS…LAVARIMMPK (219 aa)) is the Radical SAM core domain. [4Fe-4S] cluster-binding residues include Cys-59, Cys-63, and Cys-66. [2Fe-2S] cluster-binding residues include Cys-103, Cys-134, Cys-194, and Arg-266.

This sequence belongs to the radical SAM superfamily. Biotin synthase family. Homodimer. Requires [4Fe-4S] cluster as cofactor. The cofactor is [2Fe-2S] cluster.

It carries out the reaction (4R,5S)-dethiobiotin + (sulfur carrier)-SH + 2 reduced [2Fe-2S]-[ferredoxin] + 2 S-adenosyl-L-methionine = (sulfur carrier)-H + biotin + 2 5'-deoxyadenosine + 2 L-methionine + 2 oxidized [2Fe-2S]-[ferredoxin]. Its pathway is cofactor biosynthesis; biotin biosynthesis; biotin from 7,8-diaminononanoate: step 2/2. Its function is as follows. Catalyzes the conversion of dethiobiotin (DTB) to biotin by the insertion of a sulfur atom into dethiobiotin via a radical-based mechanism. In Pseudomonas paraeruginosa (strain DSM 24068 / PA7) (Pseudomonas aeruginosa (strain PA7)), this protein is Biotin synthase.